Reading from the N-terminus, the 322-residue chain is N-acetyl-gamma-glutamyl-phosphate reductase (322 aa).

Cys132 is a catalytic residue.

The protein belongs to the NAGSA dehydrogenase family. Type 1 subfamily.

The protein localises to the cytoplasm. The catalysed reaction is N-acetyl-L-glutamate 5-semialdehyde + phosphate + NADP(+) = N-acetyl-L-glutamyl 5-phosphate + NADPH + H(+). The protein operates within amino-acid biosynthesis; L-arginine biosynthesis; N(2)-acetyl-L-ornithine from L-glutamate: step 3/4. Functionally, catalyzes the NADPH-dependent reduction of N-acetyl-5-glutamyl phosphate to yield N-acetyl-L-glutamate 5-semialdehyde. The chain is N-acetyl-gamma-glutamyl-phosphate reductase from Bacteroides fragilis (strain ATCC 25285 / DSM 2151 / CCUG 4856 / JCM 11019 / LMG 10263 / NCTC 9343 / Onslow / VPI 2553 / EN-2).